The primary structure comprises 185 residues: Elongation factor P (185 aa).

Belongs to the elongation factor P family.

It localises to the cytoplasm. Its pathway is protein biosynthesis; polypeptide chain elongation. In terms of biological role, involved in peptide bond synthesis. Stimulates efficient translation and peptide-bond synthesis on native or reconstituted 70S ribosomes in vitro. Probably functions indirectly by altering the affinity of the ribosome for aminoacyl-tRNA, thus increasing their reactivity as acceptors for peptidyl transferase. In Desulfitobacterium hafniense (strain Y51), this protein is Elongation factor P.